The sequence spans 570 residues: Urease subunit alpha (570 aa).

Positions 133-570 (GGIDNHIHYI…LPLAQLYNLF (438 aa)) constitute a Urease domain. Ni(2+) contacts are provided by H138, H140, and K221. K221 bears the N6-carboxylysine mark. Position 223 (H223) interacts with substrate. Ni(2+) contacts are provided by H250 and H276. The Proton donor role is filled by H324. A Ni(2+)-binding site is contributed by D364.

Belongs to the metallo-dependent hydrolases superfamily. Urease alpha subunit family. Heterotrimer of UreA (gamma), UreB (beta) and UreC (alpha) subunits. Three heterotrimers associate to form the active enzyme. Ni cation serves as cofactor. Post-translationally, carboxylation allows a single lysine to coordinate two nickel ions.

Its subcellular location is the cytoplasm. It catalyses the reaction urea + 2 H2O + H(+) = hydrogencarbonate + 2 NH4(+). It participates in nitrogen metabolism; urea degradation; CO(2) and NH(3) from urea (urease route): step 1/1. This Cytophaga hutchinsonii (strain ATCC 33406 / DSM 1761 / CIP 103989 / NBRC 15051 / NCIMB 9469 / D465) protein is Urease subunit alpha.